The chain runs to 127 residues: Glycine cleavage system H protein (127 aa).

The 82-residue stretch at 24–105 (TALVGITDFA…YNEGWIVKMK (82 aa)) folds into the Lipoyl-binding domain. Lys-65 bears the N6-lipoyllysine mark.

This sequence belongs to the GcvH family. As to quaternary structure, the glycine cleavage system is composed of four proteins: P, T, L and H. The cofactor is (R)-lipoate.

Functionally, the glycine cleavage system catalyzes the degradation of glycine. The H protein shuttles the methylamine group of glycine from the P protein to the T protein. This Chlorobaculum tepidum (strain ATCC 49652 / DSM 12025 / NBRC 103806 / TLS) (Chlorobium tepidum) protein is Glycine cleavage system H protein.